The following is a 115-amino-acid chain: Macrophage migration inhibitory factor homolog (115 aa).

Proline 2 serves as the catalytic Proton acceptor; via imino nitrogen. Substrate contacts are provided by lysine 33 and isoleucine 65.

It belongs to the MIF family.

The protein resides in the secreted. The enzyme catalyses L-dopachrome = 5,6-dihydroxyindole-2-carboxylate. It carries out the reaction 3-phenylpyruvate = enol-phenylpyruvate. In terms of biological role, tautomerization of the methyl ester of L-dopachrome. Inhibits migration of human peripheral blood mononuclear cells. In Brugia malayi (Filarial nematode worm), this protein is Macrophage migration inhibitory factor homolog.